We begin with the raw amino-acid sequence, 704 residues long: MNPIVKQFKYGQHTVTLETGAIARQATAAVMASMDDTTVFVSVVAKKDVKEGQDFFPLTVDYQERTYAAGKIPGGFFKREGRPSEGETLIARLIDRPIRPLFPEGFLNEIQIIATVVSVNPQISPDLVAMIGASAALSLSGVPFNGPIGAARVGFINDQFVLNPTMAEQKQSRLDLVVAGTDKAVLMVESEADILTEEQMLAAVVFGHQQQQVVVEAIKEFVAEAGKPRWDWVAPEPDSALISKVKAIAENRLGDAYRITEKQVRYEQIDAIKADVIAQITAEDEEVSEGKIVDIFTALESQIVRGRIIAGEPRIDGRTVDTVRALDICTGVLPRTHGSAIFTRGETQSLAVVTLGTERDAQILDELTGERQDTFLFHYNFPPYSVGETGRVGSPKRREIGHGRLAKRGVAAVMPSISEFPYVVRVVSEITESNGSSSMASVCGASLALMDAGVPVKSAVAGIAMGLVKEDDKFVVLSDILGDEDHLGDMDFKVAGTRTGVTALQMDIKIEGITPEIMQIALNQAKSARMHILGVMEQAISAPRAEISEFAPRIYTMKIDPKKIKDVIGKGGATIRALTEETGTSIDIDDDGTVKIAAVDGNAVKTVMARIEDITAEVEAGAVYTGKVTRLADFGAFVAIVGNKEGLVHISQIAEERVEKVSDYLQVGQEVQVKVVEIDRQGRIRLTMRDLGSKEESQELSVEQ.

Aspartate 485 and aspartate 491 together coordinate Mg(2+). In terms of domain architecture, KH spans 552 to 611; sequence PRIYTMKIDPKKIKDVIGKGGATIRALTEETGTSIDIDDDGTVKIAAVDGNAVKTVMARI. The S1 motif domain maps to 621 to 689; it reads GAVYTGKVTR…RQGRIRLTMR (69 aa).

This sequence belongs to the polyribonucleotide nucleotidyltransferase family. As to quaternary structure, component of the RNA degradosome, which is a multiprotein complex involved in RNA processing and mRNA degradation. It depends on Mg(2+) as a cofactor.

It is found in the cytoplasm. The catalysed reaction is RNA(n+1) + phosphate = RNA(n) + a ribonucleoside 5'-diphosphate. In terms of biological role, involved in mRNA degradation. Catalyzes the phosphorolysis of single-stranded polyribonucleotides processively in the 3'- to 5'-direction. The chain is Polyribonucleotide nucleotidyltransferase from Mannheimia succiniciproducens (strain KCTC 0769BP / MBEL55E).